We begin with the raw amino-acid sequence, 552 residues long: Hydroxylamine reductase (552 aa).

4 residues coordinate [2Fe-2S] cluster: C3, C6, C18, and C25. 8 residues coordinate hybrid [4Fe-2O-2S] cluster: H250, E274, C318, C406, C434, C459, E493, and K495. C406 carries the post-translational modification Cysteine persulfide.

This sequence belongs to the HCP family. Requires [2Fe-2S] cluster as cofactor. The cofactor is hybrid [4Fe-2O-2S] cluster.

Its subcellular location is the cytoplasm. It catalyses the reaction A + NH4(+) + H2O = hydroxylamine + AH2 + H(+). In terms of biological role, catalyzes the reduction of hydroxylamine to form NH(3) and H(2)O. The protein is Hydroxylamine reductase of Shewanella sediminis (strain HAW-EB3).